The sequence spans 96 residues: Progonadoliberin-1 (96 aa).

Residues 1–26 form the signal peptide; sequence MHRKMAVKTLSVWLLLVGTLVPQHCC. A Pyrrolidone carboxylic acid modification is found at Gln27. Glycine amide is present on Gly36.

It belongs to the GnRH family. In terms of tissue distribution, preoptic area of the brain.

The protein resides in the secreted. Functionally, stimulates the secretion of gonadotropins. The polypeptide is Progonadoliberin-1 (gnrh1) (Verasper moseri (Barfin flounder)).